A 170-amino-acid chain; its full sequence is uncharacterized protein (170 aa).

A disordered region spans residues 35–57 (EEVMPATAPSTDPAVPKDAQEAD).

This is an uncharacterized protein from Candida tsukubaensis (Yeast).